The chain runs to 189 residues: Interferon alpha-G (189 aa).

The N-terminal stretch at 1-23 (MAPAWSLLLALLLLSCNAICSLG) is a signal peptide. 2 disulfides stabilise this stretch: C24–C122 and C52–C162.

Belongs to the alpha/beta interferon family.

The protein resides in the secreted. Produced by macrophages, IFN-alpha have antiviral activities. Interferon stimulates the production of two enzymes: a protein kinase and an oligoadenylate synthetase. This is Interferon alpha-G (IFNAG) from Bos taurus (Bovine).